We begin with the raw amino-acid sequence, 163 residues long: Probable chemoreceptor glutamine deamidase CheD (163 aa).

Belongs to the CheD family.

The catalysed reaction is L-glutaminyl-[protein] + H2O = L-glutamyl-[protein] + NH4(+). Probably deamidates glutamine residues to glutamate on methyl-accepting chemotaxis receptors (MCPs), playing an important role in chemotaxis. This is Probable chemoreceptor glutamine deamidase CheD from Borreliella burgdorferi (strain ATCC 35210 / DSM 4680 / CIP 102532 / B31) (Borrelia burgdorferi).